The chain runs to 115 residues: Large ribosomal subunit protein eL30 (115 aa).

Belongs to the eukaryotic ribosomal protein eL30 family. Component of the large ribosomal subunit.

The protein resides in the cytoplasm. Functionally, component of the large ribosomal subunit. The ribosome is a large ribonucleoprotein complex responsible for the synthesis of proteins in the cell. This Gallus gallus (Chicken) protein is Large ribosomal subunit protein eL30 (RPL30).